The sequence spans 302 residues: Dihydroorotate dehydrogenase B (NAD(+)), catalytic subunit (302 aa).

FMN contacts are provided by residues S20 and 44 to 45 (KG). Substrate-binding positions include K44 and 68–72 (NSVGL). Residues N98 and N125 each coordinate FMN. N125 serves as a coordination point for substrate. Residue C128 is the Nucleophile of the active site. Positions 163 and 189 each coordinate FMN. 190-191 (NT) provides a ligand contact to substrate. FMN-binding positions include G215, 241–242 (GG), and 263–264 (GT).

This sequence belongs to the dihydroorotate dehydrogenase family. Type 1 subfamily. As to quaternary structure, heterotetramer of 2 PyrK and 2 PyrD type B subunits. It depends on FMN as a cofactor.

The protein localises to the cytoplasm. It catalyses the reaction (S)-dihydroorotate + NAD(+) = orotate + NADH + H(+). It participates in pyrimidine metabolism; UMP biosynthesis via de novo pathway; orotate from (S)-dihydroorotate (NAD(+) route): step 1/1. Catalyzes the conversion of dihydroorotate to orotate with NAD(+) as electron acceptor. This chain is Dihydroorotate dehydrogenase B (NAD(+)), catalytic subunit (pyrD), found in Thermoanaerobacter pseudethanolicus (strain ATCC 33223 / 39E) (Clostridium thermohydrosulfuricum).